A 244-amino-acid chain; its full sequence is Na(+)-translocating NADH-quinone reductase subunit E (244 aa).

6 helical membrane-spanning segments follow: residues 11–31, 50–70, 90–110, 123–143, 153–173, and 191–211; these read LLGI…TFLG, MSVA…HYFI, FLEL…LELL, GIFL…LFGI, VVFS…FATI, and ISFI…GIDI.

It belongs to the NqrDE/RnfAE family. As to quaternary structure, composed of six subunits; NqrA, NqrB, NqrC, NqrD, NqrE and NqrF.

It is found in the cell inner membrane. The catalysed reaction is a ubiquinone + n Na(+)(in) + NADH + H(+) = a ubiquinol + n Na(+)(out) + NAD(+). In terms of biological role, NQR complex catalyzes the reduction of ubiquinone-1 to ubiquinol by two successive reactions, coupled with the transport of Na(+) ions from the cytoplasm to the periplasm. NqrA to NqrE are probably involved in the second step, the conversion of ubisemiquinone to ubiquinol. The polypeptide is Na(+)-translocating NADH-quinone reductase subunit E (Chlamydia trachomatis serovar L2 (strain ATCC VR-902B / DSM 19102 / 434/Bu)).